The primary structure comprises 348 residues: Lipoyl synthase (348 aa).

Residues 1-45 (MSESAKPRITSGSKFRNEHGFSAIKDGVKRSSSNTEGKSLERKPK) are disordered. 7 residues coordinate [4Fe-4S] cluster: Cys73, Cys78, Cys84, Cys99, Cys103, Cys106, and Ser314. A Radical SAM core domain is found at 85–303 (WTNGTATIMV…RDIGLEKGFM (219 aa)).

It belongs to the radical SAM superfamily. Lipoyl synthase family. [4Fe-4S] cluster serves as cofactor.

It localises to the cytoplasm. It carries out the reaction [[Fe-S] cluster scaffold protein carrying a second [4Fe-4S](2+) cluster] + N(6)-octanoyl-L-lysyl-[protein] + 2 oxidized [2Fe-2S]-[ferredoxin] + 2 S-adenosyl-L-methionine + 4 H(+) = [[Fe-S] cluster scaffold protein] + N(6)-[(R)-dihydrolipoyl]-L-lysyl-[protein] + 4 Fe(3+) + 2 hydrogen sulfide + 2 5'-deoxyadenosine + 2 L-methionine + 2 reduced [2Fe-2S]-[ferredoxin]. The protein operates within protein modification; protein lipoylation via endogenous pathway; protein N(6)-(lipoyl)lysine from octanoyl-[acyl-carrier-protein]: step 2/2. Functionally, catalyzes the radical-mediated insertion of two sulfur atoms into the C-6 and C-8 positions of the octanoyl moiety bound to the lipoyl domains of lipoate-dependent enzymes, thereby converting the octanoylated domains into lipoylated derivatives. This is Lipoyl synthase from Marinobacter nauticus (strain ATCC 700491 / DSM 11845 / VT8) (Marinobacter aquaeolei).